We begin with the raw amino-acid sequence, 82 residues long: Putative membrane protein insertion efficiency factor (82 aa).

It belongs to the UPF0161 family.

It localises to the cell inner membrane. Functionally, could be involved in insertion of integral membrane proteins into the membrane. In Rickettsia rickettsii (strain Iowa), this protein is Putative membrane protein insertion efficiency factor.